The following is a 459-amino-acid chain: Serine/threonine-protein kinase 12 (459 aa).

Positions Met1 to Ser30 are disordered. 3 ANK repeats span residues Asp42–Tyr71, Asp75–Pro104, and Trp108–Met137. Residues Val102–Leu417 form the Protein kinase domain. ATP is bound by residues Trp108 to Ala116 and Lys184. Catalysis depends on Asp281, which acts as the Proton acceptor.

Belongs to the protein kinase superfamily. Ser/Thr protein kinase family. As to quaternary structure, interacts with BLUS1, PHOT1 and PHOT2. As to expression, accumulates in leaves, stems, petioles and roots, especially in guard cells.

Its subcellular location is the cytoplasm. It localises to the cytosol. The enzyme catalyses L-seryl-[protein] + ATP = O-phospho-L-seryl-[protein] + ADP + H(+). The catalysed reaction is L-threonyl-[protein] + ATP = O-phospho-L-threonyl-[protein] + ADP + H(+). Functionally, serine/threonine protein kinase that phosphorylates proteins on serine and threonine residues. Mediates blue light-dependent stomatal opening in guard cells by promoting plasma membrane-type ATPases (AHA1 and AHA2) phosphorylation. In Arabidopsis thaliana (Mouse-ear cress), this protein is Serine/threonine-protein kinase 12.